The sequence spans 1458 residues: ATPase family AAA domain-containing protein 2B (1458 aa).

Residues Met-1–Asp-155 are disordered. Phosphoserine is present on Ser-16. Residues Pro-23 to Gly-33 are compositionally biased toward gly residues. The span at Gly-34–Ala-58 shows a compositional bias: low complexity. Phosphoserine occurs at positions 79, 81, and 86. Positions Val-99–Trp-115 are enriched in basic and acidic residues. The span at Asn-116–Gly-129 shows a compositional bias: polar residues. Ser-140 carries the phosphoserine modification. Thr-221 is modified (phosphothreonine). Residues Asn-244–Leu-286 form a disordered region. Residues Thr-256–Glu-279 show a composition bias toward acidic residues. Ser-318 is modified (phosphoserine). Residues Arg-321–Ile-332 show a composition bias toward basic residues. Residues Arg-321–Met-353 are disordered. Gly-441 to Thr-448 contacts ATP. Residue Ser-939 is modified to Phosphoserine. Positions Gln-943–Leu-974 form a coiled coil. One can recognise a Bromo domain in the interval Arg-951 to Glu-1066. 3 disordered regions span residues Asp-1189 to Ser-1208, Gln-1217 to Ser-1257, and Leu-1309 to Glu-1330. The span at Asn-1240–Asn-1252 shows a compositional bias: low complexity. Phosphoserine occurs at positions 1338 and 1347.

It belongs to the AAA ATPase family. As to quaternary structure, binds acetylated lysine residues in histone H1.4, H2A, H2B, H3 and H4 (in vitro).

The protein resides in the nucleus. This is ATPase family AAA domain-containing protein 2B (ATAD2B) from Homo sapiens (Human).